We begin with the raw amino-acid sequence, 116 residues long: Ly-6/neurotoxin-like protein 1 (116 aa).

Positions 1–20 (MTPLLTLILVVLMGLPLAQA) are cleaved as a signal peptide. Residues 21–107 (LDCHVCAYNG…TPATLALAPI (87 aa)) enclose the UPAR/Ly6 domain. 5 disulfide bridges follow: C23-C46, C26-C33, C39-C64, C68-C85, and C86-C91. C91 carries GPI-anchor amidated cysteine lipidation. The propeptide at 92 to 116 (NGTGLATPATLALAPILLATLWGLL) is removed in mature form.

In terms of assembly, interacts with nAChRs containing alpha-4:beta-2 (CHRNA4:CHRNB2) and alpha-7 (CHRNA7) subunits. Interacts with CHRNA4 probably in the endoplasmic reticulum prior to nAChR pentameric assembly. Interacts with KCNA2/Potassium voltage-gated channel subfamily A member 2.

It is found in the cell membrane. It localises to the cell projection. The protein localises to the dendrite. Its subcellular location is the endoplasmic reticulum. Its function is as follows. Acts in different tissues through interaction to nicotinic acetylcholine receptors (nAChRs). The proposed role as modulator of nAChR activity seems to be dependent on the nAChR subtype and stoichiometry, and to involve an effect on nAChR trafficking and its cell surface expression, and on single channel properties of the nAChR inserted in the plasma membrane. Modulates functional properties of nicotinic acetylcholine receptors (nAChRs) to prevent excessive excitation, and hence neurodegeneration. Enhances desensitization by increasing both the rate and extent of desensitization of alpha-4:beta-2-containing nAChRs and slowing recovery from desensitization. Promotes large amplitude ACh-evoked currents through alpha-4:beta-2 nAChRs. Is involved in regulation of the nAChR pentameric assembly in the endoplasmic reticulum. Shifts stoichiometry from high sensitivity alpha-4(2):beta-2(3) to low sensitivity alpha-4(3):beta-2(2) nAChR. In vitro modulates alpha-3:beta-4-containing nAChRs. Reduces cell surface expression of (alpha-3:beta-4)(2):beta-4 and (alpha-3:beta-4)(2):alpha-5 nAChRs suggesting an interaction with nAChR alpha-3(-):(+)beta-4 subunit interfaces and an allosteric mode. Corresponding single channel effects characterized by decreased unitary conductance, altered burst proportions and enhanced desensitization/inactivation seem to depend on nAChR alpha:alpha subunit interfaces and are greater in (alpha-3:beta-2)(2):alpha-3 when compared to (alpha-3:beta-2)(2):alpha-5 nAChRs. Prevents plasticity in the primary visual cortex late in life. This Homo sapiens (Human) protein is Ly-6/neurotoxin-like protein 1.